The following is a 619-amino-acid chain: Phosphomethylpyrimidine synthase (619 aa).

Residues 1–11 show a composition bias toward polar residues; the sequence is MHEQRSLTMNA. A disordered region spans residues 1–25; sequence MHEQRSLTMNALTPAVSTGPLPASR. Residues Asn-220, Met-249, Tyr-278, His-314, 334–336, 375–378, and Glu-414 each bind substrate; these read SRG and DGLR. Position 418 (His-418) interacts with Zn(2+). Tyr-441 provides a ligand contact to substrate. Zn(2+) is bound at residue His-482. Residues Cys-562, Cys-565, and Cys-570 each coordinate [4Fe-4S] cluster.

This sequence belongs to the ThiC family. Homodimer. [4Fe-4S] cluster serves as cofactor.

The catalysed reaction is 5-amino-1-(5-phospho-beta-D-ribosyl)imidazole + S-adenosyl-L-methionine = 4-amino-2-methyl-5-(phosphooxymethyl)pyrimidine + CO + 5'-deoxyadenosine + formate + L-methionine + 3 H(+). The protein operates within cofactor biosynthesis; thiamine diphosphate biosynthesis. Functionally, catalyzes the synthesis of the hydroxymethylpyrimidine phosphate (HMP-P) moiety of thiamine from aminoimidazole ribotide (AIR) in a radical S-adenosyl-L-methionine (SAM)-dependent reaction. The chain is Phosphomethylpyrimidine synthase from Mesorhizobium japonicum (strain LMG 29417 / CECT 9101 / MAFF 303099) (Mesorhizobium loti (strain MAFF 303099)).